We begin with the raw amino-acid sequence, 525 residues long: Ent-kaurene oxidase (525 aa).

Residues 31-51 traverse the membrane as a helical segment; it reads VHWLIYVAFGAWLCSYVIHVL. C466 contacts heme.

The protein belongs to the cytochrome P450 family. It depends on heme as a cofactor.

It localises to the membrane. It catalyses the reaction ent-kaur-16-ene + 3 reduced [NADPH--hemoprotein reductase] + 3 O2 = ent-kaur-16-en-19-oate + 3 oxidized [NADPH--hemoprotein reductase] + 4 H2O + 4 H(+). It participates in plant hormone biosynthesis; gibberellin biosynthesis. Catalyzes three successive oxidations of the 4-methyl group of ent-kaurene giving kaurenoic acid, a key step in gibberellin (GA) biosynthesis. The chain is Ent-kaurene oxidase (CYP503A1) from Fusarium fujikuroi (Bakanae and foot rot disease fungus).